Consider the following 321-residue polypeptide: Quinol oxidase subunit 2 (321 aa).

Residues 1 to 25 (MIFLFRALKPLLVLALLTVVFVLGG) form the signal peptide. Cys-26 is lipidated: N-palmitoyl cysteine. A lipid anchor (S-diacylglycerol cysteine) is attached at Cys-26. The next 2 membrane-spanning stretches (helical) occupy residues 49-69 (SIGFMLFIVGVVFVLFTIILV) and 90-110 (TFLEVVWTVIPILIVIALSVP). The disordered stretch occupies residues 294–321 (QAVSPHSKTDPFENVKENEFKKSDDTEE). Residues 300–321 (SKTDPFENVKENEFKKSDDTEE) are compositionally biased toward basic and acidic residues.

It belongs to the cytochrome c oxidase subunit 2 family.

Its subcellular location is the cell membrane. The enzyme catalyses 2 a quinol + O2 = 2 a quinone + 2 H2O. Functionally, catalyzes quinol oxidation with the concomitant reduction of oxygen to water. Major component for energy conversion during vegetative growth. Subunit II transfers the electrons from a quinol to the binuclear center of the catalytic subunit I. The chain is Quinol oxidase subunit 2 (qoxA) from Bacillus spizizenii (strain ATCC 23059 / NRRL B-14472 / W23) (Bacillus subtilis subsp. spizizenii).